The following is a 795-amino-acid chain: Phenylalanine--tRNA ligase beta subunit (795 aa).

The region spanning 39-148 (AGDFSGVVVG…QNAPVGTNLR (110 aa)) is the tRNA-binding domain. The B5 domain occupies 401 to 476 (PKLNQVSLRR…RIYGYNSIPN (76 aa)). The Mg(2+) site is built by aspartate 454, aspartate 460, glutamate 463, and glutamate 464. An FDX-ACB domain is found at 701–794 (SRFPANRRDL…LKQRFNAYLR (94 aa)).

The protein belongs to the phenylalanyl-tRNA synthetase beta subunit family. Type 1 subfamily. Tetramer of two alpha and two beta subunits. Mg(2+) serves as cofactor.

It localises to the cytoplasm. The enzyme catalyses tRNA(Phe) + L-phenylalanine + ATP = L-phenylalanyl-tRNA(Phe) + AMP + diphosphate + H(+). This is Phenylalanine--tRNA ligase beta subunit (pheT) from Pasteurella multocida (strain Pm70).